A 227-amino-acid polypeptide reads, in one-letter code: MTAATATANGNHSIEDPVVMKVQAASPIQETDFFENLYQMECFRTGEFYLKSGQMTPIYIDLRRIMSSPRVLRMAAQAMCEKIVASNLKFDYVVGVPYAALPLATLVSDILNVPMLMKRKEAKAYGTKQLIEGVYQPGGTVLLVEDVVTSGESIRETAEAIRNENLLVTDAIAVLDRQQGATANLAEDNLNFLSFLTMEKILDGLITKNEMTEERKHEIIAHLAKPF.

5-phospho-alpha-D-ribose 1-diphosphate is bound by residues lysine 51, arginine 119, lysine 120, and lysine 123. Orotate is bound by residues threonine 149 and arginine 177.

The protein belongs to the purine/pyrimidine phosphoribosyltransferase family. PyrE subfamily. As to quaternary structure, homodimer. As to expression, expressed in body wall muscles, spermatheca and vulva muscles.

The enzyme catalyses orotidine 5'-phosphate + diphosphate = orotate + 5-phospho-alpha-D-ribose 1-diphosphate. It catalyses the reaction UMP + diphosphate = 5-phospho-alpha-D-ribose 1-diphosphate + uracil. It functions in the pathway pyrimidine metabolism; UMP biosynthesis via de novo pathway; UMP from orotate: step 1/2. Its pathway is pyrimidine metabolism; UMP biosynthesis via salvage pathway; UMP from uracil: step 1/1. Its function is as follows. Phosphoribosyltransferase which catalyzes the formation of UMP from uracil in vitro and thus may be involved in UMP biosynthesis via the salvage pathway. May also participate in the first step of UMP synthesis by catalyzing the formation of orotidine 5'-phosphate, a UMP precursor, from orotate. This is Orotate phosphoribosyltransferase from Caenorhabditis elegans.